We begin with the raw amino-acid sequence, 284 residues long: Tryptophan 2,3-dioxygenase (284 aa).

Residues 51-55 (FIIQH), Tyr113, and Arg117 each bind substrate. His240 contacts heme. Thr254 contributes to the substrate binding site.

Belongs to the tryptophan 2,3-dioxygenase family. As to quaternary structure, homotetramer. Heme is required as a cofactor.

The catalysed reaction is L-tryptophan + O2 = N-formyl-L-kynurenine. Its pathway is amino-acid degradation; L-tryptophan degradation via kynurenine pathway; L-kynurenine from L-tryptophan: step 1/2. Its function is as follows. Heme-dependent dioxygenase that catalyzes the oxidative cleavage of the L-tryptophan (L-Trp) pyrrole ring and converts L-tryptophan to N-formyl-L-kynurenine. Catalyzes the oxidative cleavage of the indole moiety. The polypeptide is Tryptophan 2,3-dioxygenase (Arthrobacter sp. (strain FB24)).